The primary structure comprises 620 residues: Two-component response regulator ORR27 (620 aa).

One can recognise a Response regulatory domain in the interval 24–138 (HVLVVDDDAA…AIKFIWKHVL (115 aa)). Asp-76 is subject to 4-aspartylphosphate. Disordered regions lie at residues 171-197 (PPAV…AELS) and 215-257 (VWSS…LEAT). Positions 261-321 (KKVRTRFTWT…HLQKYRSWLE (61 aa)) form a DNA-binding region, myb-like GARP. Positions 431-456 (SVSRDAHENGNSQARGSAMSNGTSGT) are enriched in polar residues. Disordered stretches follow at residues 431–457 (SVSR…SGTR), 501–523 (SDQN…NSKT), and 596–620 (PPRG…SSGP). The segment covering 603–620 (EIASHENTNGKNGASSGP) has biased composition (polar residues).

The protein belongs to the ARR family. Type-B subfamily. Two-component system major event consists of a His-to-Asp phosphorelay between a sensor histidine kinase (HK) and a response regulator (RR). In plants, the His-to-Asp phosphorelay involves an additional intermediate named Histidine-containing phosphotransfer protein (HPt). This multistep phosphorelay consists of a His-Asp-His-Asp sequential transfer of a phosphate group between first a His and an Asp of the HK protein, followed by the transfer to a conserved His of the HPt protein and finally the transfer to an Asp in the receiver domain of the RR protein.

The protein localises to the nucleus. Functionally, transcriptional activator that binds specific DNA sequence. Functions as a response regulator involved in His-to-Asp phosphorelay signal transduction system. Phosphorylation of the Asp residue in the receiver domain activates the ability of the protein to promote the transcription of target genes. May directly activate some type-A response regulators in response to cytokinins. This chain is Two-component response regulator ORR27, found in Oryza sativa subsp. japonica (Rice).